The primary structure comprises 339 residues: N-acetylornithine carbamoyltransferase (339 aa).

Carbamoyl phosphate is bound by residues 49–52 (SMRT), tryptophan 77, and arginine 112. Residue glutamate 144 participates in N(2)-acetyl-L-ornithine binding. 148 to 151 (HPCQ) contacts carbamoyl phosphate. The N(2)-acetyl-L-ornithine site is built by lysine 252 and leucine 295. Carbamoyl phosphate is bound at residue 294-295 (CL). N6-carboxylysine is present on lysine 302. Arginine 322 provides a ligand contact to carbamoyl phosphate.

It belongs to the aspartate/ornithine carbamoyltransferase superfamily. AOTCase family. In terms of assembly, homotrimer.

It localises to the cytoplasm. The catalysed reaction is N(2)-acetyl-L-ornithine + carbamoyl phosphate = N(2)-acetyl-L-citrulline + phosphate + H(+). It participates in amino-acid biosynthesis; L-arginine biosynthesis. Carboxylation at Lys-302 increases the catalytic activity of the enzyme. Is potently inhibited by N(alpha)-acetyl-N(delta)-phosphonoacetyl-L-ornithine (PALAO). Catalyzes the transfer of the carbamoyl group from carbamoyl phosphate to the delta-amino group of N(2)-acetyl-L-ornithine to produce N(2)-acetyl-L-citrulline. This is a step in an alternative arginine biosynthesis pathway. The enzyme has no activity with ornithine. The chain is N-acetylornithine carbamoyltransferase from Xanthomonas campestris pv. campestris (strain ATCC 33913 / DSM 3586 / NCPPB 528 / LMG 568 / P 25).